The following is a 128-amino-acid chain: Fluoride-specific ion channel FluC (128 aa).

Helical transmembrane passes span 4–24, 35–55, 67–87, and 99–119; these read VFLL…VSTW, FGIL…WSIA, FLFT…LDTM, and LLNV…GIIL. G74 and T77 together coordinate Na(+).

Belongs to the fluoride channel Fluc/FEX (TC 1.A.43) family.

It is found in the cell inner membrane. The catalysed reaction is fluoride(in) = fluoride(out). Na(+) is not transported, but it plays an essential structural role and its presence is essential for fluoride channel function. Fluoride-specific ion channel. Important for reducing fluoride concentration in the cell, thus reducing its toxicity. The protein is Fluoride-specific ion channel FluC of Parabacteroides distasonis (strain ATCC 8503 / DSM 20701 / CIP 104284 / JCM 5825 / NCTC 11152).